We begin with the raw amino-acid sequence, 290 residues long: N-acetylneuraminate lyase (290 aa).

2 residues coordinate aceneuramate: Ser44 and Thr45. Catalysis depends on Tyr133, which acts as the Proton donor. The active-site Schiff-base intermediate with substrate is Lys161. Residues Thr163, Gly185, Asp187, Glu188, and Ser204 each coordinate aceneuramate.

It belongs to the DapA family. NanA subfamily. As to quaternary structure, homotetramer.

It is found in the cytoplasm. The enzyme catalyses aceneuramate = aldehydo-N-acetyl-D-mannosamine + pyruvate. The protein operates within amino-sugar metabolism; N-acetylneuraminate degradation; D-fructose 6-phosphate from N-acetylneuraminate: step 1/5. Functionally, catalyzes the reversible aldol cleavage of N-acetylneuraminic acid (sialic acid; Neu5Ac) to form pyruvate and N-acetylmannosamine (ManNAc) via a Schiff base intermediate. The sequence is that of N-acetylneuraminate lyase from Fusobacterium nucleatum subsp. nucleatum (strain ATCC 25586 / DSM 15643 / BCRC 10681 / CIP 101130 / JCM 8532 / KCTC 2640 / LMG 13131 / VPI 4355).